Here is a 376-residue protein sequence, read N- to C-terminus: Phosphatidylinositol/phosphatidylcholine transfer protein SFH11 (376 aa).

The span at 1 to 20 (MQETDRDIHISDGTMNKEEQ) shows a compositional bias: basic and acidic residues. Residues 1-24 (MQETDRDIHISDGTMNKEEQSPNN) are disordered. Positions 92-266 (EYGEVKKHYP…FLGGNCTCSD (175 aa)) constitute a CRAL-TRIO domain. Residues 323-357 (MEKYAALKTAVKDSQKRIEMLEISLHETKKVLNGL) are a coiled coil.

The protein belongs to the SFH family.

The protein localises to the golgi apparatus membrane. Its subcellular location is the cell membrane. In terms of biological role, required for transport of secretory proteins from the Golgi complex. Catalyzes the transfer of phosphatidylinositol and phosphatidylcholine between membranes in vitro. In Arabidopsis thaliana (Mouse-ear cress), this protein is Phosphatidylinositol/phosphatidylcholine transfer protein SFH11 (SFH11).